Reading from the N-terminus, the 796-residue chain is High affinity nerve growth factor receptor (796 aa).

An N-terminal signal peptide occupies residues 1–32 (MLRGGRRGQLGWHSWAAGPGSLLAWLILASAG). Topologically, residues 33–423 (AAPCPDACCP…TPFGVSVAVG (391 aa)) are extracellular. 2 disulfide bridges follow: C36/C41 and C40/C50. N67, N95, N121, N188, N202, N253, N262, N281, N318, N323, N338, N358, and N401 each carry an N-linked (GlcNAc...) asparagine glycan. LRR repeat units lie at residues 90-113 (LGEL…AFHF) and 116-137 (RLSR…TVQG). Residues 148 to 193 (NPLHCSCALRWLQRWEEEGLGGVPEQKLQCHGQGPLAHMPNASCGV) enclose the LRRCT domain. The cysteines at positions 154 and 191 are disulfide-linked. Ig-like C2-type domains are found at residues 194–283 (PTLK…VNVS) and 299–365 (WCIP…LAAN). A disulfide bridge connects residues C215 and C265. Cysteines 300 and 345 form a disulfide. The chain crosses the membrane as a helical span at residues 424–439 (LAVFACLFLSTLLLVL). Over 440 to 796 (NKCGRRNKFG…APPVYLDVLG (357 aa)) the chain is Cytoplasmic. An interaction with SQSTM1 region spans residues 469-490 (MTLGGSSLSPTEGKGSGLQGHI). A Phosphotyrosine; by autocatalysis modification is found at Y496. Positions 510–781 (IVLKWELGEG…HSIKDVHARL (272 aa)) constitute a Protein kinase domain. 516-524 (LGEGAFGKV) lines the ATP pocket. Positions 537-541 (DKMLV) match the DXXLL motif. ATP is bound at residue K544. A DXXLL motif is present at residues 607-611 (DAKLL). The Proton acceptor role is filled by D650. A phosphotyrosine; by autocatalysis mark is found at Y676, Y680, Y681, and Y791.

It belongs to the protein kinase superfamily. Tyr protein kinase family. Insulin receptor subfamily. As to quaternary structure, exists in a dynamic equilibrium between monomeric (low affinity) and dimeric (high affinity) structures. Homodimerization is induced by binding of a NGF dimer. Interacts with SQSTM1; bridges NTRK1 to NGFR. Forms a ternary complex with NGFR and KIDINS220; this complex is affected by the expression levels of KIDINS220 and an increase in KIDINS220 expression leads to a decreased association of NGFR and NTRK1. Interacts with SH2D1A; regulates NTRK1. Interacts (phosphorylated upon activation by NGF) with SHC1; mediates SHC1 phosphorylation and activation. Interacts (phosphorylated upon activation by NGF) with PLCG1; mediates PLCG1 phosphorylation and activation. Interacts (phosphorylated) with SH2B1 and SH2B2. Interacts with GRB2. Interacts with PIK3R1. Interacts with FRS2. Interacts with SORT1; may regulate NTRK1 anterograde axonal transport. Interacts with RAB7A. Found in a complex, at least composed of KIDINS220, MAGI2, NTRK1 and RAPGEF2; the complex is mainly formed at late endosomes in a nerve growth factor (NGF)-dependent manner. Interacts with RAPGEF2; the interaction is strengthened after NGF stimulation. Interacts with PTPRS. Interacts with USP36; USP36 does not deubiquitinate NTRK1. Interacts with GGA3. Interacts with TSPAN1; this interaction promotes NTRK1 stability. Post-translationally, ligand-mediated autophosphorylation. Interaction with SQSTM1 is phosphotyrosine-dependent. Autophosphorylation at Tyr-496 mediates interaction and phosphorylation of SHC1. In terms of processing, N-glycosylated. Isoform TrkA-I and isoform TrkA-II are N-glycosylated. Ubiquitinated. Undergoes polyubiquitination upon activation; regulated by NGFR. Ubiquitination by NEDD4L leads to degradation. Ubiquitination regulates the internalization of the receptor. As to expression, isoform TrkA-I is found in most non-neuronal tissues. Isoform TrkA-II is primarily expressed in neuronal cells. TrkA-III is specifically expressed by pluripotent neural stem and neural crest progenitors.

It localises to the cell membrane. It is found in the early endosome membrane. The protein resides in the late endosome membrane. Its subcellular location is the recycling endosome membrane. It carries out the reaction L-tyrosyl-[protein] + ATP = O-phospho-L-tyrosyl-[protein] + ADP + H(+). With respect to regulation, the pro-survival signaling effect of NTRK1 in neurons requires its endocytosis into signaling early endosomes and its retrograde axonal transport. This is regulated by different proteins including CFL1, RAC1 and SORT1. NTF3 is unable to induce this signaling probably due to the lability of the NTF3-NTRK1 complex in endosomes. SH2D1A inhibits the autophosphorylation of the receptor, and alters the recruitment and activation of downstream effectors and signaling cascades. Regulated by NGFR. Its function is as follows. Receptor tyrosine kinase involved in the development and the maturation of the central and peripheral nervous systems through regulation of proliferation, differentiation and survival of sympathetic and nervous neurons. High affinity receptor for NGF which is its primary ligand. Can also bind and be activated by NTF3/neurotrophin-3. However, NTF3 only supports axonal extension through NTRK1 but has no effect on neuron survival. Upon dimeric NGF ligand-binding, undergoes homodimerization, autophosphorylation and activation. Recruits, phosphorylates and/or activates several downstream effectors including SHC1, FRS2, SH2B1, SH2B2 and PLCG1 that regulate distinct overlapping signaling cascades driving cell survival and differentiation. Through SHC1 and FRS2 activates a GRB2-Ras-MAPK cascade that regulates cell differentiation and survival. Through PLCG1 controls NF-Kappa-B activation and the transcription of genes involved in cell survival. Through SHC1 and SH2B1 controls a Ras-PI3 kinase-AKT1 signaling cascade that is also regulating survival. In absence of ligand and activation, may promote cell death, making the survival of neurons dependent on trophic factors. Functionally, resistant to NGF, it constitutively activates AKT1 and NF-kappa-B and is unable to activate the Ras-MAPK signaling cascade. Antagonizes the anti-proliferative NGF-NTRK1 signaling that promotes neuronal precursors differentiation. Isoform TrkA-III promotes angiogenesis and has oncogenic activity when overexpressed. This Homo sapiens (Human) protein is High affinity nerve growth factor receptor (NTRK1).